Reading from the N-terminus, the 482-residue chain is MQRDLTVDEFLNYLYINVKELFTLKEKSFHFWRNSLISCSKTKNFLFVVVGDEVLVYDLKEISSDASEPEPCFYLHCPHEASSSRQGDINQDMPNVINNVRCELIGDLEYFITANDCGKVAIYDVQKLNREPIIYDVQHSAWGLAVSPLRILGISSNSHNVNLFHLSPEFKRFKEDYHSPWFRQETLVLEGHEHNIPCITFNSSGTLLLSGSIDRSLQIWDITSLSCLCKFYTKLSIWGVKFIDKNAFYHISILKHKPGSLIPAQQFGQSPWKPPIMSSSAFLLSHEEDFDDDAVFEGEYYVHIQDELPKTKVKNYFRTYLRQKPEELFIFTTKFSIVLCAYMGNSQIFPLVSSKNCFEEPITPRFQALHRINMIECIPELQSVVCASQSGQLTLLRLICTTKILNGNPIYVYSFVPHKIRLTHLVDAPLLGMSVCPLYPGEENPFKRFKIMLTVYTGKVISVEVQLSENLYDTSHIGNIPL.

WD repeat units follow at residues 92–133 and 191–230; these read DMPN…REPI and GHEH…CLCK.

It is found in the cytoplasm. The protein localises to the nucleus. This is an uncharacterized protein from Schizosaccharomyces pombe (strain 972 / ATCC 24843) (Fission yeast).